The chain runs to 755 residues: Serine/threonine-protein kinase GL21140 (755 aa).

Low complexity predominate over residues 18–52 (QASASGSGTPKKTAASSAAAQNSKQLLDQLSQQQK). Residues 18–128 (QASASGSGTP…GSANTNGSAS (111 aa)) are disordered. Composition is skewed to basic and acidic residues over residues 53-66 (AQEEAETHSRRDCD) and 74-84 (EPEKDLDELRD). Polar residues predominate over residues 87–99 (GSLTGSGSVGKSN). Over residues 100–128 (GSLSGASSTTSAPAGTSTPGSANTNGSAS) the composition is skewed to low complexity. Doublecortin domains follow at residues 157–243 (HRIK…VDYN) and 314–397 (RIVT…VDDF). A Protein kinase domain is found at 484 to 742 (YTLSQIIGDG…SEDILDHYWT (259 aa)). Residues 490-498 (IGDGNFAIV) and lysine 513 each bind ATP. The active-site Proton acceptor is aspartate 605.

Belongs to the protein kinase superfamily. CAMK Ser/Thr protein kinase family. CaMK subfamily.

The enzyme catalyses L-seryl-[protein] + ATP = O-phospho-L-seryl-[protein] + ADP + H(+). It carries out the reaction L-threonyl-[protein] + ATP = O-phospho-L-threonyl-[protein] + ADP + H(+). The chain is Serine/threonine-protein kinase GL21140 from Drosophila persimilis (Fruit fly).